A 715-amino-acid chain; its full sequence is Polyribonucleotide nucleotidyltransferase (715 aa).

Residues Asp-493 and Asp-499 each contribute to the Mg(2+) site. Positions 560–619 (PRMITIKINPEKIRDVIGKGGSVIRALTEETGTTIDISDDGVVTIASTNSDGMAEAKKRI) constitute a KH domain. The S1 motif domain maps to 629-697 (GQVYEGTVLK…EKGRVRLSAK (69 aa)).

This sequence belongs to the polyribonucleotide nucleotidyltransferase family. Requires Mg(2+) as cofactor.

Its subcellular location is the cytoplasm. It carries out the reaction RNA(n+1) + phosphate = RNA(n) + a ribonucleoside 5'-diphosphate. Involved in mRNA degradation. Catalyzes the phosphorolysis of single-stranded polyribonucleotides processively in the 3'- to 5'-direction. In Burkholderia lata (strain ATCC 17760 / DSM 23089 / LMG 22485 / NCIMB 9086 / R18194 / 383), this protein is Polyribonucleotide nucleotidyltransferase.